A 259-amino-acid polypeptide reads, in one-letter code: MRVLVSNDDGVDAPGIQILAEALRHAGHEVMVVAPDRDRSGASNSLTLDVPIRTRRVDAQTCAVAGTPTDCVHLALTGMLDYDPDIVVSGINNSANLGDDVIYSGTVSAAMEGRFLGLPAVAVSLVTHNHQAHHYDTAARAAVEIVARLKADPLPADTILNVNVPDLAWSDVLGFEVTRLGNRHRSEPCVPQRDPRGRTVYWIGPAGPEQDAGAGTDFHAVRTGHISITPIHVDLTRYQALDTVAGWVGGLTAALDGPA.

A divalent metal cation is bound by residues D8, D9, S40, and N92.

Belongs to the SurE nucleotidase family. A divalent metal cation is required as a cofactor.

It is found in the cytoplasm. The catalysed reaction is a ribonucleoside 5'-phosphate + H2O = a ribonucleoside + phosphate. Functionally, nucleotidase that shows phosphatase activity on nucleoside 5'-monophosphates. The polypeptide is 5'-nucleotidase SurE (Xanthomonas euvesicatoria pv. vesicatoria (strain 85-10) (Xanthomonas campestris pv. vesicatoria)).